The following is a 597-amino-acid chain: Phosphomethylpyrimidine synthase (597 aa).

Substrate contacts are provided by residues N207, M236, Y265, H301, 321 to 323 (SRG), 362 to 365 (DGLR), and E401. H405 is a binding site for Zn(2+). Y428 provides a ligand contact to substrate. Residue H469 participates in Zn(2+) binding. The [4Fe-4S] cluster site is built by C549, C552, and C557.

It belongs to the ThiC family. Homodimer. [4Fe-4S] cluster serves as cofactor.

The enzyme catalyses 5-amino-1-(5-phospho-beta-D-ribosyl)imidazole + S-adenosyl-L-methionine = 4-amino-2-methyl-5-(phosphooxymethyl)pyrimidine + CO + 5'-deoxyadenosine + formate + L-methionine + 3 H(+). It participates in cofactor biosynthesis; thiamine diphosphate biosynthesis. In terms of biological role, catalyzes the synthesis of the hydroxymethylpyrimidine phosphate (HMP-P) moiety of thiamine from aminoimidazole ribotide (AIR) in a radical S-adenosyl-L-methionine (SAM)-dependent reaction. The sequence is that of Phosphomethylpyrimidine synthase from Gluconobacter oxydans (strain 621H) (Gluconobacter suboxydans).